We begin with the raw amino-acid sequence, 609 residues long: (R)-linalool synthase TPS5, chloroplastic (609 aa).

The transit peptide at 1–42 (MVSILSNIGMMVVTFKRPSLFTSLRRRSANNIIITKHSHPIS) directs the protein to the chloroplast. Arg-325, Asp-362, Asp-366, Arg-503, and Asp-506 together coordinate (2E)-geranyl diphosphate. Positions 362 and 366 each coordinate Mg(2+). The short motif at 362–366 (DDIYD) is the DDXXD motif element. Asp-506, Thr-510, and Glu-514 together coordinate Mg(2+).

Belongs to the terpene synthase family. Tpsb subfamily. Mg(2+) serves as cofactor. The cofactor is Mn(2+). Highly expressed in young fruits and plant tops. Expressed in flower buds and trichomes of petioles and stems. Expressed at low levels in young leaves, stems, petioles, sepals and petals.

The protein localises to the plastid. Its subcellular location is the chloroplast. It carries out the reaction (2E)-geranyl diphosphate + H2O = (R)-linalool + diphosphate. It catalyses the reaction (2E,6E)-farnesyl diphosphate + H2O = (6E)-nerolidol + diphosphate. Its pathway is secondary metabolite biosynthesis; terpenoid biosynthesis. In terms of biological role, involved in monoterpene (C10) biosynthesis in glandular trichomes. Converts geranyl diphosphate to linalool in glandular trichomes in response to jasmonate (JA). Can convert farnesyl diphosphate to nerolidol in vitro. The sequence is that of (R)-linalool synthase TPS5, chloroplastic from Solanum lycopersicum (Tomato).